The sequence spans 702 residues: Pheromone-processing carboxypeptidase KEX1 (702 aa).

The N-terminal stretch at 1–19 (MKLILSTLIVFIHTLLVSA) is a signal peptide. Residues 20 to 555 (LPTKEGSDPN…SDSTSSKFTR (536 aa)) are Lumenal-facing. Residues Asn85 and Asn122 are each glycosylated (N-linked (GlcNAc...) asparagine). Residues Ser184 and Asp394 contribute to the active site. N-linked (GlcNAc...) asparagine glycosylation is found at Asn441 and Asn449. Residue His452 is part of the active site. The interval 491–548 (SRKESDASADGEENAGSDKVPGDSPSQTIDPMISSSTASSSSVESSLSSSTASADSDS) is disordered. The segment covering 524 to 548 (SSSTASSSSVESSLSSSTASADSDS) has biased composition (low complexity). Residues 556–576 (LIQLAVILVIFWGVYVLYASY) form a helical membrane-spanning segment. The Cytoplasmic portion of the chain corresponds to 577 to 702 (KSRPSSIIKK…THNQKQKPMN (126 aa)). Disordered stretches follow at residues 582–603 (SIIKKPTNNTSNVTRSSAGKKK) and 660–702 (IELG…KPMN). Polar residues-rich tracts occupy residues 587–598 (PTNNTSNVTRSS) and 692–702 (ATHNQKQKPMN).

The protein belongs to the peptidase S10 family.

The protein resides in the golgi apparatus. The protein localises to the trans-Golgi network membrane. The enzyme catalyses Preferential release of a C-terminal arginine or lysine residue.. In terms of biological role, protease with a carboxypeptidase B-like function involved in the C-terminal processing of the lysine and arginine residues from protein precursors. Promotes cell fusion and is involved in the programmed cell death. The protein is Pheromone-processing carboxypeptidase KEX1 (KEX1) of Candida albicans (strain SC5314 / ATCC MYA-2876) (Yeast).